Here is a 252-residue protein sequence, read N- to C-terminus: MSRKPIIAGNWKMNKTLSEAQAFVEAVKNNLPSSDNVESVIGAPALFLAPMAYLRQGSELKLAAENSYFENAGAFTGENSPAAIVDLGVEYIIIGHSERREYFHETDEDINKKAKAIFAAGATPILCCGETLETFEAGKTAEWVSGQIEAGLAGLSAEQVSNLVIAYEPIWAIGTGKTATNEIADETCGVVRSTVEKLYGKEVSEAVRIQYGGSVKPETIEGLMAKENIDGALVGGASLEADSFLALLEMYK.

Residue 10–12 participates in substrate binding; it reads NWK. The active-site Electrophile is the His96. Glu168 acts as the Proton acceptor in catalysis. Substrate is bound by residues Gly174, Ser214, and 235 to 236; that span reads GG.

Belongs to the triosephosphate isomerase family. In terms of assembly, homodimer.

The protein resides in the cytoplasm. The enzyme catalyses D-glyceraldehyde 3-phosphate = dihydroxyacetone phosphate. It participates in carbohydrate biosynthesis; gluconeogenesis. It functions in the pathway carbohydrate degradation; glycolysis; D-glyceraldehyde 3-phosphate from glycerone phosphate: step 1/1. Functionally, involved in the gluconeogenesis. Catalyzes stereospecifically the conversion of dihydroxyacetone phosphate (DHAP) to D-glyceraldehyde-3-phosphate (G3P). The chain is Triosephosphate isomerase from Lactococcus lactis subsp. lactis (strain IL1403) (Streptococcus lactis).